The chain runs to 317 residues: Adenine deaminase (317 aa).

Zn(2+)-binding residues include histidine 14, histidine 16, and histidine 194. Residue glutamate 197 is the Proton donor of the active site. Zn(2+) is bound at residue aspartate 275. Aspartate 276 lines the substrate pocket.

Belongs to the metallo-dependent hydrolases superfamily. Adenosine and AMP deaminases family. Adenine deaminase type 2 subfamily. Zn(2+) is required as a cofactor.

It carries out the reaction adenine + H2O + H(+) = hypoxanthine + NH4(+). Its function is as follows. Catalyzes the hydrolytic deamination of adenine to hypoxanthine. Plays an important role in the purine salvage pathway and in nitrogen catabolism. The polypeptide is Adenine deaminase (Bordetella bronchiseptica (strain ATCC BAA-588 / NCTC 13252 / RB50) (Alcaligenes bronchisepticus)).